The primary structure comprises 876 residues: Protein argonaute 17 (876 aa).

In terms of domain architecture, PAZ spans 246–338 (PVVDYVAQLL…LPLEVCKIAE (93 aa)). The Piwi domain maps to 514–834 (LLIVILPNNN…LSSRARCYIK (321 aa)). The interval 839-859 (GDSTSHTSLPSEEDSSAASET) is disordered.

This sequence belongs to the argonaute family. Ago subfamily.

In terms of biological role, probably involved in the RNA silencing pathway. May bind to short RNAs such as microRNAs (miRNAs) or short interfering RNAs (siRNAs), and represses the translation of mRNAs which are complementary to them. The protein is Protein argonaute 17 (AGO17) of Oryza sativa subsp. japonica (Rice).